We begin with the raw amino-acid sequence, 478 residues long: Adenosylhomocysteinase (478 aa).

Substrate is bound by residues Thr67, Asp144, and Glu204. 205–207 (TTT) contacts NAD(+). Lys234 and Asp238 together coordinate substrate. Residues Asn239, 268-273 (GYGDVG), Glu291, Asn326, 347-349 (IGH), and Asn392 each bind NAD(+).

The protein belongs to the adenosylhomocysteinase family. Requires NAD(+) as cofactor.

It localises to the cytoplasm. It catalyses the reaction S-adenosyl-L-homocysteine + H2O = L-homocysteine + adenosine. The protein operates within amino-acid biosynthesis; L-homocysteine biosynthesis; L-homocysteine from S-adenosyl-L-homocysteine: step 1/1. Its function is as follows. May play a key role in the regulation of the intracellular concentration of adenosylhomocysteine. The chain is Adenosylhomocysteinase from Nitrosomonas eutropha (strain DSM 101675 / C91 / Nm57).